Here is a 421-residue protein sequence, read N- to C-terminus: Ankyrin repeat domain-containing protein 61 (421 aa).

ANK repeat units follow at residues 27–57 (TLHS…NQPL), 74–103 (QPIF…DPEV), 107–146 (QGFT…NAVL), 166–195 (NKHS…QVNA), 199–228 (SSMT…NVNC), 233–272 (TGNT…QVNA), 276–305 (EGQT…NVNI), and 309–342 (NGES…PLRL).

This is Ankyrin repeat domain-containing protein 61 (Ankrd61) from Mus musculus (Mouse).